A 316-amino-acid chain; its full sequence is Palmitoyltransferase ZDHHC3-A (316 aa).

Topologically, residues 1–45 (MRSPVPRFRDVERQASGLQPPQCLPSCHERQSSMWFIKDACGIVC) are cytoplasmic. A helical transmembrane segment spans residues 46 to 66 (AIITWFLVFFAEFVVLFVMLI). Residues 67–70 (PSKN) are Lumenal-facing. Residues 71 to 91 (LTYSLVNGTLFNSLAFLALAS) form a helical membrane-spanning segment. Residues 92–169 (HFRAMCTDPG…NCVGENNQKY (78 aa)) are Cytoplasmic-facing. The DHHC domain maps to 124–175 (VYKCPKCCSIKPDRAHHCSVCKRCIRKMDHHCPWVNNCVGENNQKYFVLFTM). A lipid anchor (S-palmitoyl cysteine) is attached at Cys-144. The active-site S-palmitoyl cysteine intermediate is Cys-155. The chain crosses the membrane as a helical span at residues 170–190 (FVLFTMYICLISLHSLVMVVF). The Lumenal portion of the chain corresponds to 191–212 (HFLNCFEDDWTKCSTFSPPATV). A helical transmembrane segment spans residues 213–233 (ILLILLCFEGLLFLIFTSVMF). At 234 to 316 (GTQVHSICTD…DVIEIPLEPH (83 aa)) the chain is on the cytoplasmic side.

This sequence belongs to the DHHC palmitoyltransferase family. Monomer. Homooligomers. The monomeric form has a higher catalytic activity. Forms heterooligomers with zdhhc7. Post-translationally, autopalmitoylated.

It is found in the golgi apparatus membrane. It catalyses the reaction L-cysteinyl-[protein] + hexadecanoyl-CoA = S-hexadecanoyl-L-cysteinyl-[protein] + CoA. The enzyme catalyses L-cysteinyl-[protein] + tetradecanoyl-CoA = S-tetradecanoyl-L-cysteinyl-[protein] + CoA. It carries out the reaction L-cysteinyl-[protein] + octadecanoyl-CoA = S-octadecanoyl-L-cysteinyl-[protein] + CoA. Golgi-localized palmitoyltransferase that catalyzes the addition of palmitate onto various protein substrates and regulates their association with membranes. Has no stringent fatty acid selectivity and in addition to palmitate can also transfer onto target proteins myristate from tetradecanoyl-CoA and stearate from octadecanoyl-CoA. This Danio rerio (Zebrafish) protein is Palmitoyltransferase ZDHHC3-A (zdhhc3a).